The following is a 317-amino-acid chain: Porphobilinogen deaminase (317 aa).

Cys240 carries the post-translational modification S-(dipyrrolylmethanemethyl)cysteine.

This sequence belongs to the HMBS family. Monomer. Dipyrromethane serves as cofactor.

It catalyses the reaction 4 porphobilinogen + H2O = hydroxymethylbilane + 4 NH4(+). It participates in porphyrin-containing compound metabolism; protoporphyrin-IX biosynthesis; coproporphyrinogen-III from 5-aminolevulinate: step 2/4. In terms of biological role, tetrapolymerization of the monopyrrole PBG into the hydroxymethylbilane pre-uroporphyrinogen in several discrete steps. The sequence is that of Porphobilinogen deaminase from Nitratidesulfovibrio vulgaris (strain DSM 19637 / Miyazaki F) (Desulfovibrio vulgaris).